The following is a 731-amino-acid chain: Gelsolin (731 aa).

Residues 2–125 (VVEHPEFLKA…YKKGGVASGF (124 aa)) form an actin-severing region. The stretch at 25 to 107 (FDLVPVPPNL…VQGFESATFL (83 aa)) is one Gelsolin-like 1 repeat. Tyr-35 is modified (phosphotyrosine). Ca(2+) contacts are provided by Gly-41, Asp-42, Glu-73, Asp-85, Gly-90, and Ala-92. The tract at residues 72-75 (DESG) is actin-actin interfilament contact point. Residue 111 to 118 (KSGLKYKK) coordinates a 1,2-diacyl-sn-glycero-3-phospho-(1D-myo-inositol-4,5-bisphosphate). A Ca(2+)-binding site is contributed by Val-121. 137–145 (RLLQVKGRR) is a binding site for a 1,2-diacyl-sn-glycero-3-phospho-(1D-myo-inositol-4,5-bisphosphate). Residues 147–219 (VRATEVPVSW…FEEGAEPEAM (73 aa)) form a Gelsolin-like 2 repeat. Gly-162 and Asp-163 together coordinate Ca(2+). An intrachain disulfide couples Cys-164 to Cys-177. Positions 185, 235, 278, 279, and 303 each coordinate Ca(2+). The stretch at 266–338 (DENPFAQGAL…LPEGGETPLF (73 aa)) is one Gelsolin-like 3 repeat. Residues Tyr-358 and Tyr-414 each carry the phosphotyrosine modification. The actin-binding, Ca-sensitive stretch occupies residues 383–731 (AAQHGMDDDG…LDRALAELAA (349 aa)). The Gelsolin-like 4 repeat unit spans residues 404-485 (SNKVPVDPAT…VQGKEPAHLM (82 aa)). Ca(2+) is bound by residues Gly-420, Asp-421, Glu-451, Asp-463, Gly-468, Pro-470, and Thr-500. Lys-533 bears the N6-acetyllysine mark. Residues 533 to 591 (KAGALNSNDAFVLKTPSAAYLWVGAGASEAEKTGAQELLRVLRAQPVQVAEGSEPDSFW) form a Gelsolin-like 5 repeat. Ca(2+) is bound by residues Asn-540 and Asp-541. At Tyr-552 the chain carries Phosphotyrosine. Residue Glu-563 coordinates Ca(2+). A Phosphotyrosine modification is found at Tyr-600. The stretch at 630-705 (IEEVPGEFMQ…VKQGFEPPSF (76 aa)) is one Gelsolin-like 6 repeat. Ca(2+)-binding residues include Asp-645, Asp-646, and Glu-668. Residue Thr-691 is modified to Phosphothreonine.

It belongs to the villin/gelsolin family. Binds to actin and to fibronectin. Identified in a complex composed of ACTA1, COBL, GSN and TMSB4X. Interacts with the inactive form of EIF2AK2/PKR. Interacts with FLII.

It localises to the cytoplasm. The protein localises to the cytoskeleton. Functionally, calcium-regulated, actin-modulating protein that binds to the plus (or barbed) ends of actin monomers or filaments, preventing monomer exchange (end-blocking or capping). It can promote the assembly of monomers into filaments (nucleation) as well as sever filaments already formed. Plays a role in ciliogenesis. This chain is Gelsolin (GSN), found in Equus caballus (Horse).